Consider the following 707-residue polypeptide: ATP-dependent zinc metalloprotease FtsH (707 aa).

Over 1–25 (MSELDNKKDKSKDSNKKPKKPGAFS) the chain is Cytoplasmic. A helical transmembrane segment spans residues 26-46 (IGNIIIFVIVALLLIWVVFAF). Topologically, residues 47–128 (LPNNPGTNKS…GTTFTGLELA (82 aa)) are extracellular. A helical membrane pass occupies residues 129–149 (TLAIANTSASGIGTLNFSGLV). Topologically, residues 150 to 707 (TPTNQALAIL…IKTDESLDIK (558 aa)) are cytoplasmic. 246–253 (GPPGTGKT) contacts ATP. His-468 is a binding site for Zn(2+). Residue Glu-469 is part of the active site. Residues His-472 and Asp-546 each coordinate Zn(2+).

In the central section; belongs to the AAA ATPase family. The protein in the C-terminal section; belongs to the peptidase M41 family. As to quaternary structure, homohexamer. Zn(2+) serves as cofactor.

Its subcellular location is the cell membrane. Its function is as follows. Acts as a processive, ATP-dependent zinc metallopeptidase for both cytoplasmic and membrane proteins. Plays a role in the quality control of integral membrane proteins. The sequence is that of ATP-dependent zinc metalloprotease FtsH from Mycoplasma mobile (strain ATCC 43663 / 163K / NCTC 11711) (Mesomycoplasma mobile).